The sequence spans 289 residues: Acetyl-coenzyme A carboxylase carboxyl transferase subunit beta (289 aa).

Positions 27 to 289 (LWSKCPSCES…SFMRVPAGAA (263 aa)) constitute a CoA carboxyltransferase N-terminal domain. Zn(2+)-binding residues include C31, C34, C50, and C53. A C4-type zinc finger spans residues 31–53 (CPSCESVLYRTDLESNSEVCPKC).

The protein belongs to the AccD/PCCB family. As to quaternary structure, acetyl-CoA carboxylase is a heterohexamer composed of biotin carboxyl carrier protein (AccB), biotin carboxylase (AccC) and two subunits each of ACCase subunit alpha (AccA) and ACCase subunit beta (AccD). Zn(2+) serves as cofactor.

It localises to the cytoplasm. It carries out the reaction N(6)-carboxybiotinyl-L-lysyl-[protein] + acetyl-CoA = N(6)-biotinyl-L-lysyl-[protein] + malonyl-CoA. Its pathway is lipid metabolism; malonyl-CoA biosynthesis; malonyl-CoA from acetyl-CoA: step 1/1. Component of the acetyl coenzyme A carboxylase (ACC) complex. Biotin carboxylase (BC) catalyzes the carboxylation of biotin on its carrier protein (BCCP) and then the CO(2) group is transferred by the transcarboxylase to acetyl-CoA to form malonyl-CoA. The sequence is that of Acetyl-coenzyme A carboxylase carboxyl transferase subunit beta from Methylobacillus flagellatus (strain ATCC 51484 / DSM 6875 / VKM B-1610 / KT).